An 801-amino-acid polypeptide reads, in one-letter code: Mitochondrial intermediate peptidase (801 aa).

The N-terminal 41 residues, 1–41 (MKPQLLTPLRRRPWTCRQCLQRLQRLQQQTRRSFETAASPA), are a transit peptide targeting the mitochondrion. The tract at residues 31–54 (RRSFETAASPAPGHTQVDYIPADA) is disordered. A Zn(2+)-binding site is contributed by histidine 565. Residue glutamate 566 is part of the active site. The Zn(2+) site is built by histidine 569 and histidine 572.

This sequence belongs to the peptidase M3 family. The cofactor is Zn(2+).

Its subcellular location is the mitochondrion matrix. It catalyses the reaction Release of an N-terminal octapeptide as second stage of processing of some proteins imported into the mitochondrion.. Functionally, cleaves proteins, imported into the mitochondrion, to their mature size. While most mitochondrial precursor proteins are processed to the mature form in one step by mitochondrial processing peptidase (MPP), the sequential cleavage by MIP of an octapeptide after initial processing by MPP is a required step for a subgroup of nuclear-encoded precursor proteins destined for the matrix or the inner membrane. This Aspergillus clavatus (strain ATCC 1007 / CBS 513.65 / DSM 816 / NCTC 3887 / NRRL 1 / QM 1276 / 107) protein is Mitochondrial intermediate peptidase (oct1).